The primary structure comprises 787 residues: Phenylalanine--tRNA ligase beta subunit (787 aa).

A tRNA-binding domain is found at 38–151 (GQDPAPFVVA…SDYEVGDSFF (114 aa)). A B5 domain is found at 397-474 (SEGRVISFNP…RMHGYDKVQE (78 aa)). Mg(2+) is bound by residues D452, D458, E461, and E462. The region spanning 694-785 (HKYQPVKRDF…VAQKLGGELR (92 aa)) is the FDX-ACB domain.

The protein belongs to the phenylalanyl-tRNA synthetase beta subunit family. Type 1 subfamily. As to quaternary structure, tetramer of two alpha and two beta subunits. Requires Mg(2+) as cofactor.

The protein localises to the cytoplasm. The catalysed reaction is tRNA(Phe) + L-phenylalanine + ATP = L-phenylalanyl-tRNA(Phe) + AMP + diphosphate + H(+). This chain is Phenylalanine--tRNA ligase beta subunit, found in Anaplasma marginale (strain St. Maries).